Here is an 85-residue protein sequence, read N- to C-terminus: Scratcher peptide (85 aa).

Positions 1-24 (MTSVQSVTCCCLLWLMLSVQPITP) are cleaved as a signal peptide. Positions 25–38 (GSPGPAQLSRERSF) are excised as a propeptide. Residue Glu-47 is modified to 4-carboxyglutamate. Asp-67 is subject to Aspartic acid 1-amide. Residues 68–85 (KRDVVSPRIRRRKRSKAM) constitute a propeptide that is removed on maturation.

The protein belongs to the conotoxin J superfamily. Post-translationally, contains 2 disulfide bonds. In terms of tissue distribution, expressed by the venom duct.

It localises to the secreted. Causes scratching in mice. The sequence is that of Scratcher peptide from Conus geographus (Geography cone).